Reading from the N-terminus, the 86-residue chain is Small ribosomal subunit protein uS15 (86 aa).

The tract at residues 1-22 (MSVDTQKVIEDNKRSAQDTGSP) is disordered. Residues 7–16 (KVIEDNKRSA) are compositionally biased toward basic and acidic residues.

This sequence belongs to the universal ribosomal protein uS15 family. In terms of assembly, part of the 30S ribosomal subunit. Forms a bridge to the 50S subunit in the 70S ribosome, contacting the 23S rRNA.

Its function is as follows. One of the primary rRNA binding proteins, it binds directly to 16S rRNA where it helps nucleate assembly of the platform of the 30S subunit by binding and bridging several RNA helices of the 16S rRNA. Forms an intersubunit bridge (bridge B4) with the 23S rRNA of the 50S subunit in the ribosome. This chain is Small ribosomal subunit protein uS15, found in Xanthomonas campestris pv. campestris (strain 8004).